A 109-amino-acid polypeptide reads, in one-letter code: Urease subunit gamma (109 aa).

The protein belongs to the urease gamma subunit family. In terms of assembly, heterotrimer of UreA (gamma), UreB (beta) and UreC (alpha) subunits. Three heterotrimers associate to form the active enzyme.

The protein localises to the cytoplasm. The enzyme catalyses urea + 2 H2O + H(+) = hydrogencarbonate + 2 NH4(+). Its pathway is nitrogen metabolism; urea degradation; CO(2) and NH(3) from urea (urease route): step 1/1. This Natronomonas pharaonis (strain ATCC 35678 / DSM 2160 / CIP 103997 / JCM 8858 / NBRC 14720 / NCIMB 2260 / Gabara) (Halobacterium pharaonis) protein is Urease subunit gamma.